The following is a 635-amino-acid chain: 3-dehydroshikimate dehydratase (635 aa).

A divalent metal cation is bound by residues E134, D165, Q191, and E239. VOC domains are found at residues 295 to 414 and 440 to 590; these read GVEF…LVEQ and RIDH…VYTE. Positions 443, 521, and 599 each coordinate Mg(2+).

This sequence belongs to the bacterial two-domain DSD family. Homodimer. Requires Co(2+) as cofactor. Ni(2+) is required as a cofactor. It depends on Mg(2+) as a cofactor. Mn(2+) serves as cofactor.

It carries out the reaction 3-dehydroshikimate = 3,4-dihydroxybenzoate + H2O. It participates in aromatic compound metabolism; 3,4-dihydroxybenzoate biosynthesis. In terms of biological role, catalyzes the conversion of 3-dehydroshikimate to protocatechuate (3,4-dihydroxybenzoate), a common intermediate of quinate and shikimate degradation pathways. This chain is 3-dehydroshikimate dehydratase, found in Pseudomonas putida (strain ATCC 47054 / DSM 6125 / CFBP 8728 / NCIMB 11950 / KT2440).